The sequence spans 76 residues: Brevinin-2ISb (76 aa).

The first 22 residues, 1 to 22 (MFTMKKSLLVLFFLGTISLSLC), serve as a signal peptide directing secretion. The propeptide at 23-41 (QEERNADEEDGGEATEEEV) is removed in mature form. A disulfide bridge connects residues C70 and C76.

As to expression, expressed by the skin glands.

The protein localises to the secreted. In terms of biological role, has antimicrobial activity against Gram-negative bacterium E.coli ATCC 8739 (MIC=12.5 ug), against Gram positive bacteria S.aureus ATCC 6538 (MIC=6.3 ug) and B.subtilis ATCC 6633 (MIC=25 ug). Has no activity against methicillin-resistant S.aureus ATCC 43300 (MIC= ug) and fungus C.albicans ATCC 90028. This chain is Brevinin-2ISb, found in Odorrana ishikawae (Ishikawa's frog).